A 371-amino-acid polypeptide reads, in one-letter code: Aspartate-semialdehyde dehydrogenase (371 aa).

NADP(+) contacts are provided by residues 9–12, 37–38, and Gln-73; these read RGMV and TS. Arg-102 is a phosphate binding site. Cys-135 (acyl-thioester intermediate) is an active-site residue. Gln-162 is a substrate binding site. Residues 165–166 and Pro-193 each bind NADP(+); that span reads SG. Glu-241 serves as a coordination point for substrate. Lys-244 contributes to the phosphate binding site. Residue Arg-268 coordinates substrate. Residue His-275 is the Proton acceptor of the active site. Gln-351 is an NADP(+) binding site.

The protein belongs to the aspartate-semialdehyde dehydrogenase family. Homodimer.

The catalysed reaction is L-aspartate 4-semialdehyde + phosphate + NADP(+) = 4-phospho-L-aspartate + NADPH + H(+). It functions in the pathway amino-acid biosynthesis; L-lysine biosynthesis via DAP pathway; (S)-tetrahydrodipicolinate from L-aspartate: step 2/4. It participates in amino-acid biosynthesis; L-methionine biosynthesis via de novo pathway; L-homoserine from L-aspartate: step 2/3. Its pathway is amino-acid biosynthesis; L-threonine biosynthesis; L-threonine from L-aspartate: step 2/5. Catalyzes the NADPH-dependent formation of L-aspartate-semialdehyde (L-ASA) by the reductive dephosphorylation of L-aspartyl-4-phosphate. The sequence is that of Aspartate-semialdehyde dehydrogenase from Neisseria meningitidis serogroup B (strain ATCC BAA-335 / MC58).